The sequence spans 538 residues: Syncytin-1 (538 aa).

The signal sequence occupies residues 1–20 (MALPYHIFLFTVLLPSFTLT). The Extracellular portion of the chain corresponds to 21–443 (APPPCRCMTS…NTGPWGLLSQ (423 aa)). An N-linked (GlcNAc...) asparagine glycan is attached at Asn-169. The CXXC signature appears at 186–189 (CWIC). 3 disulfides stabilise this stretch: Cys-186-Cys-189, Cys-186-Cys-405, and Cys-397-Cys-404. Asn-208, Asn-214, Asn-234, Asn-242, and Asn-281 each carry an N-linked (GlcNAc...) asparagine glycan. Residues 320 to 340 (ILPFVIGAGVLGALGTGIGGI) are fusion peptide. Residues 380–396 (LQNRRALDLLTAERGGT) are immunosuppression. The CX6CC motif lies at 397 to 405 (CLFLGEECC). A glycan (N-linked (GlcNAc...) asparagine) is linked at Asn-409. Residues 444-464 (WMPWILPFLGPLAAIILLLLF) form a helical membrane-spanning segment. An essential for the fusiogenic function region spans residues 465–484 (GPCIFNLLVNFVSSRIEAVK). The Cytoplasmic portion of the chain corresponds to 465–538 (GPCIFNLLVN…LLRPNSAGSS (74 aa)). The segment at 496–538 (KIYRRPLDRPASPRSDVNDIKGTPPEEILTAQPLLRPNSAGSS) is disordered.

Belongs to the gamma type-C retroviral envelope protein family. HERV class-I W env subfamily. In terms of assembly, the mature envelope protein (Env) consists of a trimer of SU-TM heterodimers attached probably by a labile interchain disulfide bond. Interacts with the C-type lectin CD209/DC-SIGN. Specific enzymatic cleavages in vivo yield mature proteins. Envelope glycoproteins are synthesized as an inactive precursor that is heavily N-glycosylated and processed likely by furin in the Golgi to yield the mature SU and TM proteins. The cleavage site between SU and TM requires the minimal sequence [KR]-X-[KR]-R. Post-translationally, the CXXC motif is highly conserved across a broad range of retroviral envelope proteins. It is thought to participate in the formation of a labile disulfide bond possibly with the CX6CC motif present in the transmembrane protein.

It localises to the cell membrane. Its subcellular location is the virion. Functionally, this endogenous retroviral envelope protein has retained its original fusogenic properties and participates in trophoblast fusion and the formation of a syncytium during placenta morphogenesis. May recognize and induce fusion through binding of SLC1A4 and SLC1A5. In terms of biological role, endogenous envelope proteins may have kept, lost or modified their original function during evolution. Retroviral envelope proteins mediate receptor recognition and membrane fusion during early infection. The surface protein (SU) mediates receptor recognition, while the transmembrane protein (TM) acts as a class I viral fusion protein. The protein may have at least 3 conformational states: pre-fusion native state, pre-hairpin intermediate state, and post-fusion hairpin state. During viral and target cell membrane fusion, the coiled coil regions (heptad repeats) assume a trimer-of-hairpins structure, positioning the fusion peptide in close proximity to the C-terminal region of the ectodomain. The formation of this structure appears to drive apposition and subsequent fusion of membranes. The protein is Syncytin-1 (ERVW-1) of Pan troglodytes (Chimpanzee).